The primary structure comprises 355 residues: Putative testis-specific Y-encoded-like protein 3 (355 aa).

Positions 1–131 are disordered; sequence MADKRAGTPE…GEEKQEVAAE (131 aa). Basic and acidic residues predominate over residues 93-128; the sequence is ASEKAEDANKEEGAIFKKEPAEEVEKQQEGEEKQEV.

Belongs to the nucleosome assembly protein (NAP) family.

In Homo sapiens (Human), this protein is Putative testis-specific Y-encoded-like protein 3 (TSPY26P).